The following is a 443-amino-acid chain: Probable D-serine dehydratase (443 aa).

N6-(pyridoxal phosphate)lysine is present on K118.

This sequence belongs to the serine/threonine dehydratase family. DsdA subfamily. Pyridoxal 5'-phosphate is required as a cofactor.

The enzyme catalyses D-serine = pyruvate + NH4(+). This chain is Probable D-serine dehydratase, found in Colwellia psychrerythraea (strain 34H / ATCC BAA-681) (Vibrio psychroerythus).